A 191-amino-acid chain; its full sequence is MSLISRLKAVVAGDEYLDDDFDELDYASEDELNDIDNFKNSPRNKNALANANPFDFMNNNRSSKVVGMPGISNSSSEVSLMEPRSFDEMPQAIQALRERKTVILNLTMMDPDQAQRAVDFIAGGTYAIDGHQERVGESIFLFAPSCVNVTSSSPEEASPSSVPTENTPQYSLGKNTTPEPAWGNSKLSAYS.

Low complexity predominate over residues Ser-151–Glu-165. The interval Ser-151–Ser-191 is disordered. Residues Asn-166 to Pro-178 are compositionally biased toward polar residues.

Belongs to the SepF family. In terms of assembly, homodimer. Interacts with FtsZ.

Its subcellular location is the cytoplasm. Functionally, cell division protein that is part of the divisome complex and is recruited early to the Z-ring. Probably stimulates Z-ring formation, perhaps through the cross-linking of FtsZ protofilaments. Its function overlaps with FtsA. This chain is Cell division protein SepF, found in Prochlorococcus marinus (strain MIT 9215).